The chain runs to 406 residues: MSEWLRFLKRDQQLDVYFFAVPRLSLDIMGYWPGKTGDTWPWRSLIHFAILAIGVATELHAGMCFLDRQQITLALETLCPAGTSAVTLLKMFLMLRFRQDLSIMWNRLRGLLFDPNWERPEQRDIRLKHSAMAARINFWPLSAGFFTCTTYNLKPILIAMILYLQNRYEDFVWFTPFNMTMPKVLLNYPFFPLTYIFIAYTGYVTIFMFGGCDGFYFEFCAHLSALFEVLQAEIESMFRPYTDHLELSPVQLYILEQKMRSVIIRHNAIIDLTRFFRDRYTIITLAHFVSAAMVIGFSMVNLLTLGNNGLGAMLYVAYTVAALSQLLVYCYGGTLVAESSTGLCRAMFSCPWQLFKPKQRRLVQLLILRSQRPVSMAVPFFSPSLATFAAILQTSGSIIALVKSFQ.

Topologically, residues 1-45 (MSEWLRFLKRDQQLDVYFFAVPRLSLDIMGYWPGKTGDTWPWRSL) are cytoplasmic. A helical transmembrane segment spans residues 46-66 (IHFAILAIGVATELHAGMCFL). Over 67 to 74 (DRQQITLA) the chain is Extracellular. The chain crosses the membrane as a helical span at residues 75-95 (LETLCPAGTSAVTLLKMFLML). The Cytoplasmic segment spans residues 96-143 (RFRQDLSIMWNRLRGLLFDPNWERPEQRDIRLKHSAMAARINFWPLSA). Residues 144–164 (GFFTCTTYNLKPILIAMILYL) form a helical membrane-spanning segment. Over 165-189 (QNRYEDFVWFTPFNMTMPKVLLNYP) the chain is Extracellular. The N-linked (GlcNAc...) asparagine glycan is linked to asparagine 178. Residues 190 to 210 (FFPLTYIFIAYTGYVTIFMFG) traverse the membrane as a helical segment. Over 211–281 (GCDGFYFEFC…LTRFFRDRYT (71 aa)) the chain is Cytoplasmic. The chain crosses the membrane as a helical span at residues 282-302 (IITLAHFVSAAMVIGFSMVNL). The Extracellular portion of the chain corresponds to 303 to 308 (LTLGNN). The helical transmembrane segment at 309–329 (GLGAMLYVAYTVAALSQLLVY) threads the bilayer. The Cytoplasmic segment spans residues 330–372 (CYGGTLVAESSTGLCRAMFSCPWQLFKPKQRRLVQLLILRSQR). A helical membrane pass occupies residues 373 to 393 (PVSMAVPFFSPSLATFAAILQ). Topologically, residues 394-406 (TSGSIIALVKSFQ) are extracellular.

Belongs to the insect chemoreceptor superfamily. Heteromeric odorant receptor channel (TC 1.A.69) family. Or1a subfamily. As to quaternary structure, interacts with Orco. Complexes exist early in the endomembrane system in olfactory sensory neurons (OSNs), coupling these complexes to the conserved ciliary trafficking pathway. Expressed in olfactory sensory neurons in the antenna.

It is found in the cell membrane. Its function is as follows. Odorant receptor which mediates acceptance or avoidance behavior, depending on its substrates. The odorant receptor repertoire encodes a large collection of odor stimuli that vary widely in identity, intensity, and duration. May form a complex with Orco to form odorant-sensing units, providing sensitive and prolonged odorant signaling and calcium permeability. Involved in the behavioral responses to esters, and specifically to ethyl hexanoate, benzaldehyde, and acetophenone. In Drosophila melanogaster (Fruit fly), this protein is Odorant receptor 10a (Or10a).